Here is a 1354-residue protein sequence, read N- to C-terminus: Ubiquitin carboxyl-terminal hydrolase 47 (1354 aa).

The segment covering 114–133 has biased composition (polar residues); the sequence is EQPQLASDESGTADSSGLDD. The segment at 114-139 is disordered; it reads EQPQLASDESGTADSSGLDDSTQEKF. The USP domain occupies 174–549; it reads VGLVNQAMTC…NAYMLMYRLK (376 aa). Residue Cys183 is the Nucleophile of the active site. The segment at 408–438 is disordered; the sequence is DVEDEKSPQTDSCTDSGAENEGSCHSDQMSN. A compositionally biased stretch (polar residues) spans 416–438; that stretch reads QTDSCTDSGAENEGSCHSDQMSN. His488 serves as the catalytic Proton acceptor. Residues 863–882 are compositionally biased toward polar residues; sequence LSLQQHQDGGNGDSSKSTEG. Disordered regions lie at residues 863–1004 and 1314–1335; these read LSLQ…ESGK and LAKK…SPRK. Residues 920 to 930 are compositionally biased toward basic and acidic residues; that stretch reads PEERSDSDVNN. Over residues 933 to 949 the composition is skewed to low complexity; sequence STSSVDSDILSSSHSSD. The span at 977-986 shows a compositional bias: basic and acidic residues; sequence KANDGKKETW. Acidic residues predominate over residues 987–1000; the sequence is DTAEEDSGTDSEYD.

This sequence belongs to the peptidase C19 family. USP47 subfamily.

The protein resides in the cytoplasm. The catalysed reaction is Thiol-dependent hydrolysis of ester, thioester, amide, peptide and isopeptide bonds formed by the C-terminal Gly of ubiquitin (a 76-residue protein attached to proteins as an intracellular targeting signal).. Ubiquitin-specific protease that specifically deubiquitinates monoubiquitinated DNA polymerase beta (polb), stabilizing polb thereby playing a role in base-excision repair (BER). The sequence is that of Ubiquitin carboxyl-terminal hydrolase 47 (usp47) from Xenopus tropicalis (Western clawed frog).